The sequence spans 1282 residues: Clustered mitochondria protein homolog (1282 aa).

A disordered region spans residues 1–50 (MADASQATTPAAEGNPVPEVPETQTPPADVNGTTEQEQTEEGAEQALEDQ). Positions 16–36 (PVPEVPETQTPPADVNGTTEQ) are enriched in low complexity. Positions 37–47 (EQTEEGAEQAL) are enriched in acidic residues. The region spanning 331 to 575 (DNTRSQETYL…RITPLDIAWM (245 aa)) is the Clu domain. Positions 623-650 (EEKKEGEEATEEAKTEEIKTEEAEKSEE) form a coiled coil. Composition is skewed to basic and acidic residues over residues 624-661 (EKKE…KTEE) and 668-680 (VAEK…AKED). 2 disordered regions span residues 624–680 (EKKE…AKED) and 913–945 (PVAE…TSPV). TPR repeat units follow at residues 1021–1054 (AQMY…AERT), 1063–1096 (VLNY…WKVI), and 1105–1138 (ITTM…CNKV). The tract at residues 1257–1282 (VENSEKKKGGKKSKGPSNPKKRGGKA) is disordered. The span at 1264–1282 (KGGKKSKGPSNPKKRGGKA) shows a compositional bias: basic residues.

It belongs to the CLU family. In terms of assembly, may associate with the eukaryotic translation initiation factor 3 (eIF-3) complex.

It localises to the cytoplasm. Its function is as follows. mRNA-binding protein involved in proper cytoplasmic distribution of mitochondria. This is Clustered mitochondria protein homolog from Neurospora crassa (strain ATCC 24698 / 74-OR23-1A / CBS 708.71 / DSM 1257 / FGSC 987).